Reading from the N-terminus, the 94-residue chain is Integration host factor subunit beta (94 aa).

The protein belongs to the bacterial histone-like protein family. Heterodimer of an alpha and a beta chain.

This protein is one of the two subunits of integration host factor, a specific DNA-binding protein that functions in genetic recombination as well as in transcriptional and translational control. The polypeptide is Integration host factor subunit beta (Nitrosospira multiformis (strain ATCC 25196 / NCIMB 11849 / C 71)).